The sequence spans 498 residues: Ribosomal RNA small subunit methyltransferase G 2 (498 aa).

The segment at 1-230 (MRNGTIRYPG…FQRLGPPTRI (230 aa)) is methyltransferase G. Positions 89, 94, and 154 each coordinate S-adenosyl-L-methionine. A methyltransferase TrmH family region spans residues 231–498 (RKETAMKRHG…SQTKHSPAPA (268 aa)).

The protein in the N-terminal section; belongs to the methyltransferase superfamily. RNA methyltransferase RsmG family. In the C-terminal section; belongs to the class IV-like SAM-binding methyltransferase superfamily. RNA methyltransferase TrmH family.

Its subcellular location is the cytoplasm. The enzyme catalyses guanosine(527) in 16S rRNA + S-adenosyl-L-methionine = N(7)-methylguanosine(527) in 16S rRNA + S-adenosyl-L-homocysteine. Functionally, specifically methylates the N7 position of guanine in position 527 of 16S rRNA. The chain is Ribosomal RNA small subunit methyltransferase G 2 (rsmG2) from Syntrophobacter fumaroxidans (strain DSM 10017 / MPOB).